A 256-amino-acid polypeptide reads, in one-letter code: Protein YABBY 4 (256 aa).

The C4-type zinc-finger motif lies at 30 to 57 (CNCCDTILAVGVPCSSLFKTVTVRCGHC). Residues 127-168 (SCASNAPAMQMPPAKPVQQEPELPKNAPASANRPPEKRQRVP) are disordered.

It belongs to the YABBY family. Preferentially expressed in immature organs containing meristems and organ primordia. Expressed in phloem of developing vascular tissues of young seedling shoots. Expressed in the phloem of midvein vasculature of young leaves. Does not show polar expression pattern in leaf primordia.

It is found in the nucleus. Seems to be associated with phloem cell differentiation. This is Protein YABBY 4 (YAB4) from Oryza sativa subsp. japonica (Rice).